We begin with the raw amino-acid sequence, 665 residues long: Macrolide export ATP-binding/permease protein MacB (665 aa).

Residues 17 to 255 form the ABC transporter domain; that stretch reads MQVKGLIREF…AAQPASIIDK (239 aa). 53–60 is a binding site for ATP; it reads GQSGSGKS. Helical transmembrane passes span 287-307, 544-564, 588-608, and 630-650; these read LLTM…VGLG, IAII…LVSV, FLIE…GLAF, and SIIA…FLPA.

This sequence belongs to the ABC transporter superfamily. Macrolide exporter (TC 3.A.1.122) family. Homodimer. Part of the tripartite efflux system MacAB-TolC, which is composed of an inner membrane transporter, MacB, a periplasmic membrane fusion protein, MacA, and an outer membrane component, TolC. The complex forms a large protein conduit and can translocate molecules across both the inner and outer membranes. Interacts with MacA.

It localises to the cell inner membrane. Part of the tripartite efflux system MacAB-TolC. MacB is a non-canonical ABC transporter that contains transmembrane domains (TMD), which form a pore in the inner membrane, and an ATP-binding domain (NBD), which is responsible for energy generation. Confers resistance against macrolides. This chain is Macrolide export ATP-binding/permease protein MacB, found in Psychrobacter cryohalolentis (strain ATCC BAA-1226 / DSM 17306 / VKM B-2378 / K5).